The following is a 40-amino-acid chain: Cytochrome b6-f complex subunit 5 (40 aa).

The helical transmembrane segment at 5 to 25 (ILLGMVLGFVPVTIAGLLVAA) threads the bilayer.

It belongs to the PetG family. As to quaternary structure, the 4 large subunits of the cytochrome b6-f complex are cytochrome b6, subunit IV (17 kDa polypeptide, PetD), cytochrome f and the Rieske protein, while the 4 small subunits are PetG, PetL, PetM and PetN. The complex functions as a dimer.

It localises to the cell inner membrane. Functionally, component of the cytochrome b6-f complex, which mediates electron transfer between photosystem II (PSII) and photosystem I (PSI), cyclic electron flow around PSI, and state transitions. PetG is required for either the stability or assembly of the cytochrome b6-f complex. This chain is Cytochrome b6-f complex subunit 5, found in Gloeobacter violaceus (strain ATCC 29082 / PCC 7421).